A 327-amino-acid polypeptide reads, in one-letter code: Elongation factor P--(R)-beta-lysine ligase (327 aa).

80-82 serves as a coordination point for substrate; it reads SPE. ATP is bound by residues 104 to 106 and Asn-113; that span reads RNE. Residue Tyr-122 coordinates substrate. 246–247 is a binding site for ATP; it reads EL. Glu-253 contributes to the substrate binding site. Gly-302 provides a ligand contact to ATP.

Belongs to the class-II aminoacyl-tRNA synthetase family. EpmA subfamily. Homodimer.

The enzyme catalyses D-beta-lysine + L-lysyl-[protein] + ATP = N(6)-((3R)-3,6-diaminohexanoyl)-L-lysyl-[protein] + AMP + diphosphate + H(+). With EpmB is involved in the beta-lysylation step of the post-translational modification of translation elongation factor P (EF-P). Catalyzes the ATP-dependent activation of (R)-beta-lysine produced by EpmB, forming a lysyl-adenylate, from which the beta-lysyl moiety is then transferred to the epsilon-amino group of a conserved specific lysine residue in EF-P. The polypeptide is Elongation factor P--(R)-beta-lysine ligase (Haemophilus ducreyi (strain 35000HP / ATCC 700724)).